A 501-amino-acid chain; its full sequence is Splicing factor 3A subunit 3 (501 aa).

At M1 the chain carries N-acetylmethionine. Residues S54 and S121 each carry the phosphoserine modification. A Nuclear localization signal motif is present at residues 175–179; the sequence is KERKN. A phosphoserine mark is found at S295 and S299. Basic and acidic residues predominate over residues 343–354; that stretch reads ENVQRKQARTGE. Positions 343-374 are disordered; that stretch reads ENVQRKQARTGEEREEEEEEQISESESEDEEN. The segment covering 355–374 has biased composition (acidic residues); it reads EREEEEEEQISESESEDEEN. Phosphoserine is present on residues S365, S367, and S369. The segment at 406-437 adopts a Matrin-type zinc-finger fold; it reads YNCEICGNYTYRGPKAFQRHFAEWRHAHGMRC. Residue T475 is modified to Phosphothreonine.

This sequence belongs to the SF3A3 family. As to quaternary structure, component of the 17S U2 SnRNP complex, a ribonucleoprotein complex that contains small nuclear RNA (snRNA) U2 and a number of specific proteins. Part of the SF3A subcomplex of the 17S U2 SnRNP complex which is composed of three subunits; SF3A3/SAP61, SF3A2/SAP62 and SF3A1/SAP114. SF3A associates with the splicing factor SF3B and a 12S RNA unit to form the mature 17S U2 small nuclear ribonucleoprotein complex (17S U2 snRNP). Identified in the spliceosome 'E' complex, a precursor of the spliceosome 'A' complex. Identified in the spliceosome 'A' and 'B' complexes. Identified in the spliceosome 'C' complex. As to expression, ubiquitous.

The protein localises to the nucleus speckle. It localises to the nucleus. Component of the 17S U2 SnRNP complex of the spliceosome, a large ribonucleoprotein complex that removes introns from transcribed pre-mRNAs. The 17S U2 SnRNP complex (1) directly participates in early spliceosome assembly and (2) mediates recognition of the intron branch site during pre-mRNA splicing by promoting the selection of the pre-mRNA branch-site adenosine, the nucleophile for the first step of splicing. Within the 17S U2 SnRNP complex, SF3A3 is part of the SF3A subcomplex that contributes to the assembly of the 17S U2 snRNP, and the subsequent assembly of the pre-spliceosome 'E' complex and the pre-catalytic spliceosome 'A' complex. Involved in pre-mRNA splicing as a component of pre-catalytic spliceosome 'B' complexes. This Homo sapiens (Human) protein is Splicing factor 3A subunit 3 (SF3A3).